Consider the following 208-residue polypeptide: N-(5'-phosphoribosyl)anthranilate isomerase (208 aa).

It belongs to the TrpF family.

It carries out the reaction N-(5-phospho-beta-D-ribosyl)anthranilate = 1-(2-carboxyphenylamino)-1-deoxy-D-ribulose 5-phosphate. It participates in amino-acid biosynthesis; L-tryptophan biosynthesis; L-tryptophan from chorismate: step 3/5. This is N-(5'-phosphoribosyl)anthranilate isomerase from Nitrosomonas eutropha (strain DSM 101675 / C91 / Nm57).